We begin with the raw amino-acid sequence, 1158 residues long: ATP-dependent helicase/deoxyribonuclease subunit B (1158 aa).

The UvrD-like helicase ATP-binding domain maps to 1–275; the sequence is MTLHAYLGRA…QYFNQLYRFN (275 aa). 8–15 lines the ATP pocket; it reads GRAGTGKS. The UvrD-like helicase C-terminal domain maps to 269-583; it reads NQLYRFNNQD…SIGTMDLAKV (315 aa). [4Fe-4S] cluster-binding residues include Cys784, Cys1112, Cys1115, and Cys1121.

The protein belongs to the helicase family. AddB/RexB type 1 subfamily. Heterodimer of AddA and AddB. Mg(2+) is required as a cofactor. Requires [4Fe-4S] cluster as cofactor.

Functionally, the heterodimer acts as both an ATP-dependent DNA helicase and an ATP-dependent, dual-direction single-stranded exonuclease. Recognizes the chi site generating a DNA molecule suitable for the initiation of homologous recombination. The AddB subunit has 5' -&gt; 3' nuclease activity but not helicase activity. The polypeptide is ATP-dependent helicase/deoxyribonuclease subunit B (Staphylococcus aureus (strain MRSA252)).